The sequence spans 537 residues: CTP synthase (537 aa).

An amidoligase domain region spans residues 1 to 267 (MTKYIFVTGG…DQIVCDHLKL (267 aa)). CTP is bound at residue serine 13. Serine 13 contacts UTP. 14-19 (SIGKGI) contacts ATP. An L-glutamine-binding site is contributed by tyrosine 54. Residue aspartate 71 coordinates ATP. Positions 71 and 141 each coordinate Mg(2+). CTP-binding positions include 148–150 (DIE), 188–193 (KTKPTQ), and lysine 224. UTP contacts are provided by residues 188–193 (KTKPTQ) and lysine 224. 240-242 (RDV) contributes to the ATP binding site. The region spanning 292-535 (RIALVGKYVE…VTAAVKNKNQ (244 aa)) is the Glutamine amidotransferase type-1 domain. An L-glutamine-binding site is contributed by glycine 354. The active-site Nucleophile; for glutamine hydrolysis is the cysteine 381. L-glutamine contacts are provided by residues 382-385 (LGMQ), glutamate 405, and arginine 463. Residues histidine 508 and glutamate 510 contribute to the active site.

It belongs to the CTP synthase family. In terms of assembly, homotetramer.

The enzyme catalyses UTP + L-glutamine + ATP + H2O = CTP + L-glutamate + ADP + phosphate + 2 H(+). It catalyses the reaction L-glutamine + H2O = L-glutamate + NH4(+). The catalysed reaction is UTP + NH4(+) + ATP = CTP + ADP + phosphate + 2 H(+). The protein operates within pyrimidine metabolism; CTP biosynthesis via de novo pathway; CTP from UDP: step 2/2. With respect to regulation, allosterically activated by GTP, when glutamine is the substrate; GTP has no effect on the reaction when ammonia is the substrate. The allosteric effector GTP functions by stabilizing the protein conformation that binds the tetrahedral intermediate(s) formed during glutamine hydrolysis. Inhibited by the product CTP, via allosteric rather than competitive inhibition. Catalyzes the ATP-dependent amination of UTP to CTP with either L-glutamine or ammonia as the source of nitrogen. Regulates intracellular CTP levels through interactions with the four ribonucleotide triphosphates. The protein is CTP synthase of Streptococcus equi subsp. equi (strain 4047).